Here is a 262-residue protein sequence, read N- to C-terminus: MAVISMKQLLEAGVHFGHQTRRWNPKMKRYIFTERNGIYIIDLQKTVKKVEEAYNFIKQVSEDGGKVLFVGTKKQAQDSVKAEAERAGQFYVNQRWLGGILTNYKTISKRIKRISEIEKMEEDGLFEVLPKKEVVELKKEYDRLIKFLGGIRDMKSMPQALFVVDPRKERNAIAEARKLHIPIVGIVDTNCDPDEIDYVIPANDDAIRAVKLLTGKMADAILEGQQGVSNEEVAAEQNIDLDESKEATEAETTEENTSVESN.

Residues 228-262 form a disordered region; the sequence is VSNEEVAAEQNIDLDESKEATEAETTEENTSVESN.

Belongs to the universal ribosomal protein uS2 family.

This chain is Small ribosomal subunit protein uS2, found in Staphylococcus saprophyticus subsp. saprophyticus (strain ATCC 15305 / DSM 20229 / NCIMB 8711 / NCTC 7292 / S-41).